A 320-amino-acid chain; its full sequence is Ferrochelatase (320 aa).

Fe cation contacts are provided by His194 and Glu275.

The protein belongs to the ferrochelatase family.

The protein localises to the cytoplasm. It catalyses the reaction heme b + 2 H(+) = protoporphyrin IX + Fe(2+). It functions in the pathway porphyrin-containing compound metabolism; protoheme biosynthesis; protoheme from protoporphyrin-IX: step 1/1. Catalyzes the ferrous insertion into protoporphyrin IX. In Klebsiella pneumoniae (strain 342), this protein is Ferrochelatase.